We begin with the raw amino-acid sequence, 80 residues long: Conotoxin Pu11.1 (80 aa).

Positions 1–19 (MKLVLAIVLILMLLSLSTG) are cleaved as a signal peptide. The propeptide occupies 20-42 (AEMSDNHASRSATALTDRLLGPK). 4 disulfides stabilise this stretch: C46/C60, C53/C65, C59/C72, and C64/C79.

The protein belongs to the conotoxin I3 superfamily. As to expression, expressed by the venom duct.

The protein localises to the secreted. The protein is Conotoxin Pu11.1 of Conus pulicarius (Flea-bitten cone).